The chain runs to 470 residues: MMSSPIPHQQTIAAVATAVAPGQGGIAVVRLSGPAAEVVGRSVVSIPGQQLWVSHRVLYGHVMDESGKERIDEVLVLLMKGPRSFTGEDVVEIHCHGGLMAVQRVLERVLAQPHVRRALPGEFSQRAVLNGRLDLTQAEAISELVAARSRRAAQLAMTGVDGGIQRRITSLRERLLDQLSELEARVDFEEDLPPLDGAELLLELQCVRRELEQLVEDAKRGDVLRQGLQVALVGRPNVGKSSLLNRLSRRERAIVTDLPGTTRDVLESEIVLEGVPITLVDTAGIRATQDALEQLGIDRSHQALAAADVAVLVFDLSLGWTADDAALLAQIPDDLPRLLVGNKADLQPASMAASLMVASLGNEVDGKTVDVMLSALTGQGEEALIKAVLKTCGASEAQGLVVALNQRQQDLAAAAAIALARTQEAAEHQLPWDFWTIDLRQAISSLGEITGEEITEAVLDRIFSRFCIGK.

3 residues coordinate (6S)-5-formyl-5,6,7,8-tetrahydrofolate: Arg30, Glu92, and Arg132. Positions 227-393 constitute a TrmE-type G domain; the sequence is GLQVALVGRP…LIKAVLKTCG (167 aa). A K(+)-binding site is contributed by Asn237. GTP is bound by residues 237 to 242, 256 to 262, 281 to 284, and 342 to 345; these read NVGKSS, TDLPGTT, DTAG, and NKAD. Ser241 serves as a coordination point for Mg(2+). 3 residues coordinate K(+): Thr256, Leu258, and Thr261. Thr262 lines the Mg(2+) pocket. Position 470 (Lys470) interacts with (6S)-5-formyl-5,6,7,8-tetrahydrofolate.

This sequence belongs to the TRAFAC class TrmE-Era-EngA-EngB-Septin-like GTPase superfamily. TrmE GTPase family. In terms of assembly, homodimer. Heterotetramer of two MnmE and two MnmG subunits. The cofactor is K(+).

It localises to the cytoplasm. Functionally, exhibits a very high intrinsic GTPase hydrolysis rate. Involved in the addition of a carboxymethylaminomethyl (cmnm) group at the wobble position (U34) of certain tRNAs, forming tRNA-cmnm(5)s(2)U34. This Prochlorococcus marinus (strain MIT 9313) protein is tRNA modification GTPase MnmE.